Reading from the N-terminus, the 137-residue chain is Thionin-like protein 1 (137 aa).

The signal sequence occupies residues 1–23; the sequence is MEDKRVAMLVVMMLVMGNMLIEA.

This sequence belongs to the plant thionin (TC 1.C.44) family. Is disulfide-linked.

It is found in the secreted. May be involved in plant defense. This is Thionin-like protein 1 from Arabidopsis thaliana (Mouse-ear cress).